Reading from the N-terminus, the 185-residue chain is Ribosome-recycling factor (185 aa).

Belongs to the RRF family.

The protein localises to the cytoplasm. Its function is as follows. Responsible for the release of ribosomes from messenger RNA at the termination of protein biosynthesis. May increase the efficiency of translation by recycling ribosomes from one round of translation to another. This is Ribosome-recycling factor from Thermosipho africanus (strain TCF52B).